We begin with the raw amino-acid sequence, 217 residues long: CD99 antigen-like protein 2 (217 aa).

The first 25 residues, 1–25, serve as a signal peptide directing secretion; that stretch reads MVAWRWACLICLAFSLTTLVQRGSG. Over 26–141 the chain is Extracellular; that stretch reads DTGGFRLEDA…DDSGMSAETG (116 aa). The tract at residues 36 to 136 is disordered; sequence VEGTSSVKQR…GGDNSDDSGM (101 aa). Low complexity predominate over residues 50–64; sequence TTTTRRPGATRAPAK. Residues 70 to 82 are compositionally biased toward acidic residues; that stretch reads AEDDFNLADALDD. Over residues 83–92 the composition is skewed to basic and acidic residues; the sequence is QNDRDHDRKK. S134 carries O-linked (Xyl...) (chondroitin sulfate) serine glycosylation. A helical membrane pass occupies residues 142-162; it reads TIAGVASALAMALIGAVSSYI. The Cytoplasmic segment spans residues 163–217; that stretch reads SYQQKKFCFSIQQGLNADYVKGENLEAVVCEEPQVKYSALQTQSTEPPPPEPPRI.

This sequence belongs to the CD99 family. Post-translationally, O-glycosylated.

It is found in the cell membrane. The protein localises to the cell junction. Its subcellular location is the secreted. Plays a role in a late step of leukocyte extravasation helping cells to overcome the endothelial basement membrane. Acts at the same site as, but independently of, PECAM1. Homophilic adhesion molecule, but these interactions may not be required for cell aggregation. The protein is CD99 antigen-like protein 2 (CD99L2) of Bos taurus (Bovine).